Reading from the N-terminus, the 87-residue chain is HssA/B-like protein 55 (87 aa).

Positions 1–13 (MTILSAITSISRP) are enriched in polar residues. Residues 1–31 (MTILSAITSISRPNKSSKSVVSSNGGSSLSM) form a disordered region. The span at 14–31 (NKSSKSVVSSNGGSSLSM) shows a compositional bias: low complexity.

It belongs to the hssA/B family.

The polypeptide is HssA/B-like protein 55 (hssl55) (Dictyostelium discoideum (Social amoeba)).